A 2227-amino-acid chain; its full sequence is Genome polyprotein (2227 aa).

2 short sequence motifs ((L)YPX(n)L motif) span residues 167–171 (YPHGL) and 200–205 (YPVWEL). Residues 766-836 (MMSRIAAGDL…PRKKKGLFSQ (71 aa)) are involved in P1-2A pentamerization. Residues 1010–1030 (VTVEIINTVLCFVKSGILLYV) form a helical membrane-spanning segment. Residues 1043 to 1070 (IGLLRVMNYVDIGCSVISCGKVFSKMLE) form a membrane-penetrating ability region. Residues 1127-1152 (KKKDILNILKDNQQKIEKAIEEADKF) adopt a coiled-coil conformation. The SF3 helicase domain occupies 1204–1366 (HQKLKNLGSI…SFSKNPHNDM (163 aa)). An ATP-binding site is contributed by 1230–1237 (GKRGGGKS). A helical transmembrane segment spans residues 1462–1482 (WVAVGAAVGILGVLVGGWFVY). The residue at position 1499 (Tyr1499) is an O-(5'-phospho-RNA)-tyrosine. The 215-residue stretch at 1514–1728 (DPVESQSTLE…VAKLVTQEMF (215 aa)) folds into the Peptidase C3 domain. Active-site for protease 3C activity residues include His1563, Asp1603, and Cys1691. The region spanning 1976–2097 (DVGLDLDFSA…VFSRDVQIDN (122 aa)) is the RdRp catalytic domain.

Belongs to the picornaviridae polyprotein family. Homodimer. Homomultimer; probably interacts with membranes in a multimeric form. Seems to assemble into amyloid-like fibers. As to quaternary structure, homodimer. Monomer. Interacts with protein 3CD. In terms of assembly, interacts with host ACBD3. Interacts with protein 3AB. As to quaternary structure, interacts with human MAVS. In terms of assembly, homodimer; disulfide-linked. Homopentamer. Homooligomer. As to quaternary structure, interacts with capsid protein VP2. Interacts with capsid protein VP3. In terms of assembly, interacts with capsid protein VP1. Interacts with capsid protein VP3. Interacts with capsid protein VP1. Interacts with capsid protein VP2. Post-translationally, specific enzymatic cleavages by viral protease in vivo yield a variety of precursors and mature proteins. Polyprotein processing intermediates are produced, such as P1-2A which is a functional precursor of the structural proteins, VP0 which is a VP4-VP2 precursor, VP1-2A precursor, 3ABC precursor which is a stable and catalytically active precursor of 3A, 3B and 3C proteins, 3AB and 3CD precursors. The assembly signal 2A is removed from VP1-2A by a host protease, possibly host Cathepsin L. This cleavage occurs over a region of 3 amino-acids probably generating VP1 proteins with heterogeneous C-termini. During virion maturation, immature virions are rendered infectious following cleavage of VP0 into VP4 and VP2. This maturation seems to be an autocatalytic event triggered by the presence of RNA in the capsid and is followed by a conformational change of the particle. In terms of processing, the assembly signal 2A is removed from VP1-2A by a host protease, possibly host Cathepsin L in naked virions. This cleavage does not occur in enveloped virions. This cleavage occurs over a region of 3 amino-acids probably generating VP1 proteins with heterogeneous C-termini. Post-translationally, VPg is uridylylated prior to priming replication into VPg-pUpU. Unlike other picornaviruses, does not seem to be myristoylated.

It localises to the virion. Its subcellular location is the host endosome. The protein localises to the host multivesicular body. The protein resides in the host membrane. It is found in the host mitochondrion outer membrane. It localises to the host cytoplasm. Its subcellular location is the host cytoplasmic vesicle membrane. The enzyme catalyses RNA(n) + a ribonucleoside 5'-triphosphate = RNA(n+1) + diphosphate. It carries out the reaction a ribonucleoside 5'-triphosphate + H2O = a ribonucleoside 5'-diphosphate + phosphate + H(+). It catalyses the reaction Selective cleavage of Gln-|-Gly bond in the poliovirus polyprotein. In other picornavirus reactions Glu may be substituted for Gln, and Ser or Thr for Gly.. Functionally, capsid proteins VP1, VP2, and VP3 form a closed capsid enclosing the viral positive strand RNA genome. All these proteins contain a beta-sheet structure called beta-barrel jelly roll. Together they form an icosahedral capsid (T=3) composed of 60 copies of each VP1, VP2, and VP3, with a diameter of approximately 300 Angstroms. VP1 is situated at the 12 fivefold axes, whereas VP2 and VP3 are located at the quasi-sixfold axes. The naked capsid interacts with the host receptor HAVCR1 to provide virion attachment to and probably entry into the target cell. Its function is as follows. VP0 precursor is a component of the immature procapsids. Plays a role in the assembly of the 12 pentamers into an icosahedral structure. Has not been detected in mature virions, supposedly owing to its small size. In terms of biological role, precursor component of immature procapsids that corresponds to an extended form of the structural protein VP1. After maturation, possibly by the host Cathepsin L, the assembly signal 2A is cleaved to give rise to the mature VP1 protein. Functionally, functions as a viroporin. Affects membrane integrity and causes an increase in membrane permeability. Involved in host intracellular membrane rearrangements probably to give rise to the viral factories. Does not disrupt calcium homeostasis or glycoprotein trafficking. Antagonizes the innate immune response of the host by suppressing IFN-beta synthesis, which it achieves by interfering with the RIG-I/IFIH1 pathway. Its function is as follows. Affects membrane integrity and causes an increase in membrane permeability. Associates with and induces structural rearrangements of intracellular membranes. Displays RNA-binding activity. In terms of biological role, the precursor 3ABC is targeted to the mitochondrial membrane where protease 3C activity cleaves and inhibits the host antiviral protein MAVS, thereby disrupting activation of IRF3 through the IFIH1/MDA5 pathway. In vivo, the protease activity of 3ABC precursor is more efficient in cleaving the 2BC precursor than that of protein 3C. The 3ABC precursor may therefore play a role in the proteolytic processing of the polyprotein. Possible viroporin. Functionally, interacts with the 3CD precursor and with RNA structures found at both the 5'- and 3'-termini of the viral genome. Since the 3AB precursor contains the hydrophobic domain 3A, it probably anchors the whole viral replicase complex to intracellular membranes on which viral RNA synthesis occurs. Its function is as follows. May serve as membrane anchor to the 3AB and 3ABC precursors via its hydrophobic domain. May interact with RNA. Acts as a primer for viral RNA replication and remains covalently bound to viral genomic RNA. VPg is uridylylated prior to priming replication into VPg-pUpU. The VPg-pUpU is then used as primer on the genomic RNA poly(A) by the RNA-dependent RNA polymerase to replicate the viral genome. In terms of biological role, cysteine protease that generates mature viral proteins from the precursor polyprotein. In addition to its proteolytic activity, it binds to viral RNA, and thus influences viral genome replication. RNA and substrate bind cooperatively to the protease. Cleaves IKBKG/NEMO to impair innate immune signaling. Cleaves host PABPC1 which may participate in the switch of viral translation to RNA synthesis. Functionally, interacts with the 3AB precursor and with RNA structures found at both the 5'- and 3'-termini of the viral genome. Disrupts TLR3 signaling by degrading the host adapter protein TICAM1/TRIF. Its function is as follows. Replicates genomic and antigenomic RNA by recognizing replications specific signals. In Cercopithecus hamlyni (Owl-faced monkey), this protein is Genome polyprotein.